We begin with the raw amino-acid sequence, 502 residues long: MEKFQGYLEFDGARQQSFLYPLFFREYIYVLAYDHGLNRLNRNRSIFLENADYDKKYSSLIVKRLILRMYEQNRLIIPTKDLNKNLGHTNLFYYQMISVLFAVIVEIPFSLRLGSSVEGKKLKKSSNLQSIHSIFPFLEDKFSHFNYVLDVLIPYPIHLEILVQTLRYRVKDASSLHFFRFCLYEYCNWKNFDSKKKSILNPRFLLFLYNSHVCEYESIFLFLRKRSSHLRSTSYEVFFERILFYGKIQHFLKVFINNFPSILGLFKDPFLHYVRYHGKCILATKDTPLLMNKWKYYFVNLWQCYFFVWFKSQRVNINQLSKDNLKFLGYLSSLRLNPLVDRSQMLENSFLIDNVRIKLDSKIPIYSIIGSLAKNKFCNVLGHPISKATWTDSSDSDILNRFVRICRNISHYYSGSSKKKNLYRIKYILRLCCVKTLARKHKSTVRAFLKRLGSGLLEEFLTGEDQVLSLIFPRSDYASKRLYRVRVWYLDILYLNDLVNHE.

Belongs to the intron maturase 2 family. MatK subfamily.

It localises to the plastid. The protein resides in the chloroplast. Its function is as follows. Usually encoded in the trnK tRNA gene intron. Probably assists in splicing its own and other chloroplast group II introns. The polypeptide is Maturase K (Stanleya pinnata (Prince's plume)).